The following is a 224-amino-acid chain: MKVSLLLLALVLVCLVQGSESWRLRRTLRRIGRGIRRVGRVVKNVACNHACPRLCRQGVCKLACNLGCRGKRDVTQQLNQQGHVTPIPNSFAAYDMNEDGIISRKELALAIGEDIAHPDFMKAYSIADVDGDGELSPKEFYNGPYVFEMDLNDDDLAYCRYRLDIDDDLIDVIEGELVNQAPNFIEGNQVKETGKPHEIISKTGQPETKPIDKYVKLAEKTKTQ.

An N-terminal signal peptide occupies residues 1-21 (MKVSLLLLALVLVCLVQGSES). An EF-hand domain is found at 115 to 150 (IAHPDFMKAYSIADVDGDGELSPKEFYNGPYVFEMD). 5 residues coordinate Ca(2+): aspartate 128, aspartate 130, aspartate 132, glutamate 134, and glutamate 139.

Component of the acid-soluble organic matrix of calcified layers of the shell (at protein level).

Its subcellular location is the secreted. The polypeptide is EF-hand calcium-binding domain-containing protein 1 (Lottia gigantea (Giant owl limpet)).